Here is a 456-residue protein sequence, read N- to C-terminus: Zinc finger C2HC domain-containing protein 1C (456 aa).

Disordered regions lie at residues 16–46 (MLPH…QSLK) and 85–113 (YPHC…SSGP). Polar residues-rich tracts occupy residues 35-46 (YEQGDSSQQSLK) and 90-102 (GISQ…DSQG). Positions 211 to 265 (VQIRRLEAAGESLEEEIRRKQILLRGKLKKTEEELRRIQTQKEQAKENENGELQK) form a coiled coil. Residues 336–388 (NKIRDPVSEPSVEKFSPPSETPVGALQGSARNSSLSMAPDSSGSSGSIEEPQL) form a disordered region. Positions 368 to 382 (SSLSMAPDSSGSSGS) are enriched in low complexity. The segment at 387–416 (QLGECSHCGRKFLSFRLERHSNICSRMRGS) adopts a C2HC/C3H-type zinc-finger fold. Zn(2+)-binding residues include cysteine 391, cysteine 394, histidine 406, and cysteine 410.

This sequence belongs to the ZC2HC1 family. It depends on Zn(2+) as a cofactor.

This is Zinc finger C2HC domain-containing protein 1C (ZC2HC1C) from Homo sapiens (Human).